A 396-amino-acid chain; its full sequence is MSVGMGVDLEAFRKSQRADGFASILAIGTANPPNVVDQSTYPDYYFRNTNNEDNTDLKDKFKRICERSAIKKRHMYLTEEILKKNPELCAFLEVPSLDTRQAMLAVEVPRLGKEAAEKAIEEWGQPKSRITHLIFCTTTTPDLPGADFEVAKLLGLHPSVKRVGVFQHGCFAGGTVLRLAKDLAENNRGARVLVVCSENTAVTFRGPSETHLDGLVGLALFGDGAAALIVGADPIPQVEKPCFEIVWTAQTVVPNSDGAISGKLREVGLTFQLKGAVPDLISTNIEKCLVEAFSQFNISDWNQLFWIAHPGGRAILDQVEASLNLDPTKLRATRHVMSEYGNMSSACVHFILDETRKASRQNGCSTSGGGFQMGVLFGFGPGLTVETVVLKSIPFP.

Position 60-63 (lysine 60–arginine 63) interacts with substrate. The active site involves cysteine 170. Substrate contacts are provided by residues leucine 273 and glycine 311–arginine 313.

The protein belongs to the thiolase-like superfamily. Chalcone/stilbene synthases family. As to quaternary structure, homodimer.

The protein localises to the cytoplasm. It catalyses the reaction (E)-cinnamoyl-CoA + 3 malonyl-CoA + 3 H(+) = (E)-pinosylvin + 4 CO2 + 4 CoA. It carries out the reaction 3-phenylpropanoyl-CoA + 3 malonyl-CoA + 3 H(+) = dihydropinosylvin + 4 CO2 + 4 CoA. It participates in phytoalexin biosynthesis; pinosylvin biosynthesis. Catalyzes the production of pinosylvin from cinnamoyl-CoA and malonyl-CoA, and dihydropinosylvin from dihydrocinnamoyl-CoA. The protein is Pinosylvin synthase 2 of Pinus strobus (Eastern white pine).